The following is a 148-amino-acid chain: Large ribosomal subunit protein bL9 (148 aa).

It belongs to the bacterial ribosomal protein bL9 family.

In terms of biological role, binds to the 23S rRNA. The chain is Large ribosomal subunit protein bL9 from Pseudomonas putida (strain W619).